The chain runs to 234 residues: Sugar fermentation stimulation protein A (234 aa).

The H-T-H motif DNA-binding region spans 201-220 (LLSEAQQRGVEILAYKAELS).

This sequence belongs to the SfsA family.

Functionally, binds to DNA non-specifically. Could be a regulatory factor involved in maltose metabolism. This is Sugar fermentation stimulation protein A from Escherichia coli (strain SMS-3-5 / SECEC).